Reading from the N-terminus, the 400-residue chain is Betaine--homocysteine S-methyltransferase 1 (400 aa).

One can recognise a Hcy-binding domain in the interval 8–309 (RGVLERLNAG…YHIRAVAEEL (302 aa)). Zn(2+) contacts are provided by cysteine 212, cysteine 294, and cysteine 295.

Homotetramer. Zn(2+) serves as cofactor.

It is found in the cytoplasm. The enzyme catalyses L-homocysteine + glycine betaine = N,N-dimethylglycine + L-methionine. The protein operates within amine and polyamine degradation; betaine degradation; sarcosine from betaine: step 1/2. Its pathway is amino-acid biosynthesis; L-methionine biosynthesis via de novo pathway; L-methionine from L-homocysteine (BhmT route): step 1/1. In terms of biological role, involved in the regulation of homocysteine metabolism. Converts betaine and homocysteine to dimethylglycine and methionine, respectively. This reaction is also required for the irreversible oxidation of choline. The sequence is that of Betaine--homocysteine S-methyltransferase 1 (bhmt) from Danio rerio (Zebrafish).